Reading from the N-terminus, the 308-residue chain is Methionyl-tRNA formyltransferase (308 aa).

Residue 109-112 (SLLP) participates in (6S)-5,6,7,8-tetrahydrofolate binding.

This sequence belongs to the Fmt family.

It carries out the reaction L-methionyl-tRNA(fMet) + (6R)-10-formyltetrahydrofolate = N-formyl-L-methionyl-tRNA(fMet) + (6S)-5,6,7,8-tetrahydrofolate + H(+). In terms of biological role, attaches a formyl group to the free amino group of methionyl-tRNA(fMet). The formyl group appears to play a dual role in the initiator identity of N-formylmethionyl-tRNA by promoting its recognition by IF2 and preventing the misappropriation of this tRNA by the elongation apparatus. The chain is Methionyl-tRNA formyltransferase from Clostridium beijerinckii (strain ATCC 51743 / NCIMB 8052) (Clostridium acetobutylicum).